A 195-amino-acid chain; its full sequence is COMM domain-containing protein 3 (195 aa).

In terms of domain architecture, COMM spans 124-192; that stretch reads HIIDVNWRLD…DAQKQIERSS (69 aa).

This sequence belongs to the COMM domain-containing protein 3 family. In terms of assembly, component of the commander complex consisting of the CCC subcomplex and the retriever subcomplex. Component of the CCC subcomplex.

Its function is as follows. Scaffold protein in the commander complex that is essential for endosomal recycling of transmembrane cargos; the commander complex is composed of the CCC subcomplex and the retriever subcomplex. The polypeptide is COMM domain-containing protein 3 (commd3) (Dictyostelium discoideum (Social amoeba)).